Reading from the N-terminus, the 77-residue chain is Large ribosomal subunit protein bL28 (77 aa).

Residues 1 to 26 form a disordered region; it reads MARVCKVTGKRPMSGNNVSHANNKTK.

It belongs to the bacterial ribosomal protein bL28 family.

The sequence is that of Large ribosomal subunit protein bL28 from Neisseria gonorrhoeae (strain ATCC 700825 / FA 1090).